The primary structure comprises 277 residues: Putative phosphoenolpyruvate synthase regulatory protein (277 aa).

156–163 contributes to the ADP binding site; it reads GVSRAGKT.

It belongs to the pyruvate, phosphate/water dikinase regulatory protein family. PSRP subfamily.

It catalyses the reaction [pyruvate, water dikinase] + ADP = [pyruvate, water dikinase]-phosphate + AMP + H(+). The catalysed reaction is [pyruvate, water dikinase]-phosphate + phosphate + H(+) = [pyruvate, water dikinase] + diphosphate. Bifunctional serine/threonine kinase and phosphorylase involved in the regulation of the phosphoenolpyruvate synthase (PEPS) by catalyzing its phosphorylation/dephosphorylation. In Deinococcus radiodurans (strain ATCC 13939 / DSM 20539 / JCM 16871 / CCUG 27074 / LMG 4051 / NBRC 15346 / NCIMB 9279 / VKM B-1422 / R1), this protein is Putative phosphoenolpyruvate synthase regulatory protein.